The chain runs to 783 residues: LPS-assembly protein LptD (783 aa).

The signal sequence occupies residues 1 to 24; it reads MKKNYYSLISFSIFTALYSTAGFA.

It belongs to the LptD family. In terms of assembly, component of the lipopolysaccharide transport and assembly complex. Interacts with LptE and LptA.

It is found in the cell outer membrane. Its function is as follows. Together with LptE, is involved in the assembly of lipopolysaccharide (LPS) at the surface of the outer membrane. In Mannheimia succiniciproducens (strain KCTC 0769BP / MBEL55E), this protein is LPS-assembly protein LptD.